We begin with the raw amino-acid sequence, 223 residues long: Kinetochore protein Spc25 (223 aa).

A coiled-coil region spans residues 51-119; the sequence is RHQRKVGKLQ…NEIMERIQTL (69 aa).

Belongs to the SPC25 family. Component of the Ndc80 complex, which is composed of Ndc80, Nuf2 and Spc25.

Its subcellular location is the nucleus. The protein resides in the chromosome. It is found in the centromere. It localises to the kinetochore. Its function is as follows. Acts as a component of the essential kinetochore-associated Ndc80 complex, which is required for chromosome segregation and spindle checkpoint activity during meiosis and mitosis. Required for kinetochore integrity and the organization of stable microtubule binding sites in the outer plate of the kinetochore. Participates in SAC signaling that responds specifically to disruptions in spindle microtubule dynamics. The NDC80 complex synergistically enhances the affinity of the SKA1 complex for microtubules and may allow the NDC80 complex to track depolymerizing microtubules. In Drosophila teissieri (Fruit fly), this protein is Kinetochore protein Spc25.